We begin with the raw amino-acid sequence, 360 residues long: Aurora kinase B (360 aa).

The Protein kinase domain occupies 93 to 343 (FDIGRPLGKG…LKGVMEHPWV (251 aa)). Residues 99–107 (LGKGKFGNV) and Lys122 contribute to the ATP site. Residue Asp216 is the Proton acceptor of the active site.

The protein belongs to the protein kinase superfamily. Ser/Thr protein kinase family. Aurora subfamily. Component of the chromosomal passenger complex (CPC).

The protein localises to the nucleus. It localises to the chromosome. It is found in the centromere. The protein resides in the cytoplasm. Its subcellular location is the cytoskeleton. The protein localises to the spindle. It localises to the midbody. It carries out the reaction L-seryl-[protein] + ATP = O-phospho-L-seryl-[protein] + ADP + H(+). The catalysed reaction is L-threonyl-[protein] + ATP = O-phospho-L-threonyl-[protein] + ADP + H(+). Kinase activity is stimulated by cell-cycle specific phosphorylation. Its function is as follows. Serine/threonine-protein kinase component of the chromosomal passenger complex (CPC), a complex that acts as a key regulator of mitosis. The CPC complex has essential functions at the centromere in ensuring correct chromosome alignment and segregation and is required for chromatin-induced microtubule stabilization and spindle assembly. Involved in the bipolar attachment of spindle microtubules to kinetochores and is a key regulator for the onset of cytokinesis during mitosis. Required for central/midzone spindle assembly and cleavage furrow formation. Key component of the cytokinesis checkpoint, a process required to delay abscission to prevent both premature resolution of intercellular chromosome bridges and accumulation of DNA damage. Phosphorylates 'Ser-10' of histone H3 during mitosis. The chain is Aurora kinase B from Xenopus tropicalis (Western clawed frog).